The chain runs to 407 residues: Argininosuccinate synthase (407 aa).

Residue 10–18 (AYSGGLDTS) participates in ATP binding. 2 residues coordinate L-citrulline: Y88 and S93. Residue G118 participates in ATP binding. Residues T120, N124, and D125 each contribute to the L-aspartate site. N124 serves as a coordination point for L-citrulline. R128, S177, S186, E263, and Y275 together coordinate L-citrulline.

This sequence belongs to the argininosuccinate synthase family. Type 1 subfamily. Homotetramer.

It localises to the cytoplasm. The enzyme catalyses L-citrulline + L-aspartate + ATP = 2-(N(omega)-L-arginino)succinate + AMP + diphosphate + H(+). Its pathway is amino-acid biosynthesis; L-arginine biosynthesis; L-arginine from L-ornithine and carbamoyl phosphate: step 2/3. The chain is Argininosuccinate synthase from Clostridium botulinum (strain Alaska E43 / Type E3).